The chain runs to 201 residues: Large ribosomal subunit protein uL4 (201 aa).

Residues 39–72 (RRGTASTKTRAQVSKSGKKMYSQKGTGNARHGDR) form a disordered region. Polar residues predominate over residues 42–53 (TASTKTRAQVSK).

The protein belongs to the universal ribosomal protein uL4 family. As to quaternary structure, part of the 50S ribosomal subunit.

Its function is as follows. One of the primary rRNA binding proteins, this protein initially binds near the 5'-end of the 23S rRNA. It is important during the early stages of 50S assembly. It makes multiple contacts with different domains of the 23S rRNA in the assembled 50S subunit and ribosome. Functionally, forms part of the polypeptide exit tunnel. The polypeptide is Large ribosomal subunit protein uL4 (Deinococcus deserti (strain DSM 17065 / CIP 109153 / LMG 22923 / VCD115)).